Consider the following 243-residue polypeptide: CTD nuclear envelope phosphatase 1 homolog (243 aa).

A helical transmembrane segment spans residues 11–27; it reads ALLLLLSKVWTCICFMF. In terms of domain architecture, FCP1 homology spans 56–223; that stretch reads SLVQRKTLVL…LSLLPMLDAL (168 aa).

The protein belongs to the dullard family.

The protein resides in the membrane. The catalysed reaction is O-phospho-L-seryl-[protein] + H2O = L-seryl-[protein] + phosphate. The enzyme catalyses O-phospho-L-threonyl-[protein] + H2O = L-threonyl-[protein] + phosphate. Functionally, serine/threonine protein phosphatase that may dephosphorylate and activate lipin-like phosphatases. Lipins are phosphatidate phosphatases that catalyze the conversion of phosphatidic acid to diacylglycerol and control the metabolism of fatty acids at different levels. May indirectly modulate the lipid composition of nuclear and/or endoplasmic reticulum membranes and be required for proper nuclear membrane morphology and/or dynamics. May also indirectly regulate the production of lipid droplets and triacylglycerol. The chain is CTD nuclear envelope phosphatase 1 homolog (l(1)G0269) from Drosophila pseudoobscura pseudoobscura (Fruit fly).